A 157-amino-acid polypeptide reads, in one-letter code: 2-C-methyl-D-erythritol 2,4-cyclodiphosphate synthase (157 aa).

The a divalent metal cation site is built by Asp8 and His10. 4-CDP-2-C-methyl-D-erythritol 2-phosphate is bound by residues 8 to 10 (DVH) and 34 to 35 (HS). His42 is an a divalent metal cation binding site. 4-CDP-2-C-methyl-D-erythritol 2-phosphate contacts are provided by residues 56–58 (DIG), 61–65 (FPDTD), 100–106 (AQAPKMA), 132–135 (TTTE), Phe139, and Arg142.

Belongs to the IspF family. In terms of assembly, homotrimer. A divalent metal cation is required as a cofactor.

It catalyses the reaction 4-CDP-2-C-methyl-D-erythritol 2-phosphate = 2-C-methyl-D-erythritol 2,4-cyclic diphosphate + CMP. It functions in the pathway isoprenoid biosynthesis; isopentenyl diphosphate biosynthesis via DXP pathway; isopentenyl diphosphate from 1-deoxy-D-xylulose 5-phosphate: step 4/6. Its function is as follows. Involved in the biosynthesis of isopentenyl diphosphate (IPP) and dimethylallyl diphosphate (DMAPP), two major building blocks of isoprenoid compounds. Catalyzes the conversion of 4-diphosphocytidyl-2-C-methyl-D-erythritol 2-phosphate (CDP-ME2P) to 2-C-methyl-D-erythritol 2,4-cyclodiphosphate (ME-CPP) with a corresponding release of cytidine 5-monophosphate (CMP). This is 2-C-methyl-D-erythritol 2,4-cyclodiphosphate synthase from Pseudomonas syringae pv. syringae (strain B728a).